The chain runs to 362 residues: D-alanine--D-alanine ligase (362 aa).

Residues 153–357 (KKIAREAGIP…YADLLTTLVS (205 aa)) form the ATP-grasp domain. 180–235 (RELLGLPVFVKPARGGSSIGISKVDSWRDLPAAIEEAASHDPKVIIEAMITGPEVE) is an ATP binding site. Mg(2+) contacts are provided by D312, E324, and N326.

It belongs to the D-alanine--D-alanine ligase family. It depends on Mg(2+) as a cofactor. Requires Mn(2+) as cofactor.

The protein localises to the cytoplasm. It catalyses the reaction 2 D-alanine + ATP = D-alanyl-D-alanine + ADP + phosphate + H(+). It functions in the pathway cell wall biogenesis; peptidoglycan biosynthesis. Cell wall formation. The polypeptide is D-alanine--D-alanine ligase (Corynebacterium urealyticum (strain ATCC 43042 / DSM 7109)).